The chain runs to 381 residues: Erythronate-4-phosphate dehydrogenase (381 aa).

The substrate site is built by serine 45 and threonine 67. NAD(+)-binding positions include aspartate 148, 207–209 (ASR), and aspartate 233. Residue arginine 209 is part of the active site. Glutamate 238 is an active-site residue. Histidine 255 acts as the Proton donor in catalysis. An NAD(+)-binding site is contributed by glycine 258.

It belongs to the D-isomer specific 2-hydroxyacid dehydrogenase family. PdxB subfamily. In terms of assembly, homodimer.

Its subcellular location is the cytoplasm. It catalyses the reaction 4-phospho-D-erythronate + NAD(+) = (R)-3-hydroxy-2-oxo-4-phosphooxybutanoate + NADH + H(+). It functions in the pathway cofactor biosynthesis; pyridoxine 5'-phosphate biosynthesis; pyridoxine 5'-phosphate from D-erythrose 4-phosphate: step 2/5. Functionally, catalyzes the oxidation of erythronate-4-phosphate to 3-hydroxy-2-oxo-4-phosphonooxybutanoate. This chain is Erythronate-4-phosphate dehydrogenase, found in Idiomarina loihiensis (strain ATCC BAA-735 / DSM 15497 / L2-TR).